Consider the following 150-residue polypeptide: Cytochrome c oxidase subunit 5A, mitochondrial (150 aa).

The transit peptide at 1–41 directs the protein to the mitochondrion; it reads MLGAALRRCAVAATSRAGPRGLLHSAPNPGPAAAIQSVRCY. Residues 2–17 carry the SIFI-degron motif; sequence LGAALRRCAVAATSRA. Residues Lys-87 and Lys-113 each carry the N6-acetyllysine modification. Thr-141 carries the post-translational modification Phosphothreonine.

It belongs to the cytochrome c oxidase subunit 5A family. In terms of assembly, component of the cytochrome c oxidase (complex IV, CIV), a multisubunit enzyme composed of 14 subunits. The complex is composed of a catalytic core of 3 subunits MT-CO1, MT-CO2 and MT-CO3, encoded in the mitochondrial DNA, and 11 supernumerary subunits COX4I, COX5A, COX5B, COX6A, COX6B, COX6C, COX7A, COX7B, COX7C, COX8 and NDUFA4, which are encoded in the nuclear genome. The complex exists as a monomer or a dimer and forms supercomplexes (SCs) in the inner mitochondrial membrane with NADH-ubiquinone oxidoreductase (complex I, CI) and ubiquinol-cytochrome c oxidoreductase (cytochrome b-c1 complex, complex III, CIII), resulting in different assemblies (supercomplex SCI(1)III(2)IV(1) and megacomplex MCI(2)III(2)IV(2)). Interacts with AFG1L. Interacts with RAB5IF. Post-translationally, in response to mitochondrial stress, the precursor protein is ubiquitinated by the SIFI complex in the cytoplasm before mitochondrial import, leading to its degradation. Within the SIFI complex, UBR4 initiates ubiquitin chain that are further elongated or branched by KCMF1.

Its subcellular location is the mitochondrion inner membrane. Its pathway is energy metabolism; oxidative phosphorylation. Its function is as follows. Component of the cytochrome c oxidase, the last enzyme in the mitochondrial electron transport chain which drives oxidative phosphorylation. The respiratory chain contains 3 multisubunit complexes succinate dehydrogenase (complex II, CII), ubiquinol-cytochrome c oxidoreductase (cytochrome b-c1 complex, complex III, CIII) and cytochrome c oxidase (complex IV, CIV), that cooperate to transfer electrons derived from NADH and succinate to molecular oxygen, creating an electrochemical gradient over the inner membrane that drives transmembrane transport and the ATP synthase. Cytochrome c oxidase is the component of the respiratory chain that catalyzes the reduction of oxygen to water. Electrons originating from reduced cytochrome c in the intermembrane space (IMS) are transferred via the dinuclear copper A center (CU(A)) of subunit 2 and heme A of subunit 1 to the active site in subunit 1, a binuclear center (BNC) formed by heme A3 and copper B (CU(B)). The BNC reduces molecular oxygen to 2 water molecules using 4 electrons from cytochrome c in the IMS and 4 protons from the mitochondrial matrix. This Saguinus labiatus (Red-chested mustached tamarin) protein is Cytochrome c oxidase subunit 5A, mitochondrial (COX5A).